The sequence spans 264 residues: ATP synthase subunit a (264 aa).

A run of 7 helical transmembrane segments spans residues tryptophan 30 to tyrosine 50, isoleucine 90 to isoleucine 110, proline 111 to proline 131, aspartate 134 to isoleucine 154, isoleucine 177 to leucine 197, leucine 208 to valine 228, and leucine 235 to valine 255.

It belongs to the ATPase A chain family. F-type ATPases have 2 components, CF(1) - the catalytic core - and CF(0) - the membrane proton channel. CF(1) has five subunits: alpha(3), beta(3), gamma(1), delta(1), epsilon(1). CF(0) has three main subunits: a(1), b(2) and c(9-12). The alpha and beta chains form an alternating ring which encloses part of the gamma chain. CF(1) is attached to CF(0) by a central stalk formed by the gamma and epsilon chains, while a peripheral stalk is formed by the delta and b chains.

It is found in the cell inner membrane. In terms of biological role, key component of the proton channel; it plays a direct role in the translocation of protons across the membrane. The chain is ATP synthase subunit a from Shewanella frigidimarina (strain NCIMB 400).